We begin with the raw amino-acid sequence, 402 residues long: 1-deoxy-D-xylulose 5-phosphate reductoisomerase (402 aa).

The NADPH site is built by Thr-21, Gly-22, Ser-23, Ile-24, Gly-47, Asn-50, and Asn-127. Lys-128 is a binding site for 1-deoxy-D-xylulose 5-phosphate. Glu-129 contacts NADPH. Asp-151 serves as a coordination point for Mn(2+). 4 residues coordinate 1-deoxy-D-xylulose 5-phosphate: Ser-152, Glu-153, Ser-177, and His-200. Glu-153 serves as a coordination point for Mn(2+). NADPH is bound at residue Gly-206. 1-deoxy-D-xylulose 5-phosphate is bound by residues Ser-213, Asn-218, Lys-219, and Glu-222. Position 222 (Glu-222) interacts with Mn(2+).

It belongs to the DXR family. The cofactor is Mg(2+). Mn(2+) is required as a cofactor.

It carries out the reaction 2-C-methyl-D-erythritol 4-phosphate + NADP(+) = 1-deoxy-D-xylulose 5-phosphate + NADPH + H(+). The protein operates within isoprenoid biosynthesis; isopentenyl diphosphate biosynthesis via DXP pathway; isopentenyl diphosphate from 1-deoxy-D-xylulose 5-phosphate: step 1/6. Its function is as follows. Catalyzes the NADPH-dependent rearrangement and reduction of 1-deoxy-D-xylulose-5-phosphate (DXP) to 2-C-methyl-D-erythritol 4-phosphate (MEP). This is 1-deoxy-D-xylulose 5-phosphate reductoisomerase from Mycobacterium ulcerans (strain Agy99).